We begin with the raw amino-acid sequence, 325 residues long: Ribosomal RNA small subunit methyltransferase H (325 aa).

Residues 39-41 (GGH), Asp-59, Phe-90, Asp-108, and Gln-115 each bind S-adenosyl-L-methionine.

Belongs to the methyltransferase superfamily. RsmH family.

Its subcellular location is the cytoplasm. It carries out the reaction cytidine(1402) in 16S rRNA + S-adenosyl-L-methionine = N(4)-methylcytidine(1402) in 16S rRNA + S-adenosyl-L-homocysteine + H(+). Specifically methylates the N4 position of cytidine in position 1402 (C1402) of 16S rRNA. The protein is Ribosomal RNA small subunit methyltransferase H of Leptothrix cholodnii (strain ATCC 51168 / LMG 8142 / SP-6) (Leptothrix discophora (strain SP-6)).